Here is a 333-residue protein sequence, read N- to C-terminus: MRIWWLLLAIEICTGNINSQDTCRQGHPGIPGNPGHNGLPGRDGRDGAKGDKGDAGEPGRPGSPGKDGTSGEKGERGADGKVEAKGIKGDQGSRGSPGKHGPKGLAGPMGEKGLRGETGPQGQKGNKGDVGPTGPEGPRGNIGPLGPTGLPGPMGPIGKPGPKGEAGPTGPQGEPGVRGIRGWKGDRGEKGKIGETLVLPKSAFTVGLTVLSKFPSSDMPIKFDKILYNEFNHYDTAAGKFTCHIAGVYYFTYHITVFSRNVQVSLVKNGVKILHTKDAYMSSEDQASGGIVLQLKLGDEVWLQVTGGERFNGLFADEDDDTTFTGFLLFSSP.

An N-terminal signal peptide occupies residues 1–19; that stretch reads MRIWWLLLAIEICTGNINS. 3 consecutive Collagen-like domains span residues 24–82, 95–154, and 155–191; these read RQGH…DGKV, GSPG…PGPM, and GPIG…GEKG. The tract at residues 24-188 is disordered; that stretch reads RQGHPGIPGN…GIRGWKGDRG (165 aa). A compositionally biased stretch (low complexity) spans 26–40; sequence GHPGIPGNPGHNGLP. A 4-hydroxyproline mark is found at Pro31, Pro34, and Pro40. The segment covering 42 to 57 has biased composition (basic and acidic residues); sequence RDGRDGAKGDKGDAGE. Pro58, Pro61, and Pro64 each carry 4-hydroxyproline. A compositionally biased stretch (basic and acidic residues) spans 69–88; it reads TSGEKGERGADGKVEAKGIK. A 5-hydroxylysine mark is found at Lys73 and Lys127. O-linked (Gal...) hydroxylysine glycans are attached at residues Lys73 and Lys127. 4-hydroxyproline occurs at positions 151, 160, and 175. The 137-residue stretch at 197-333 folds into the C1q domain; that stretch reads LVLPKSAFTV…FTGFLLFSSP (137 aa).

In terms of assembly, multimers (predominantly trimers). Interacts with ADIPOQ via the C1q domain to form a heterotrimeric complex. Interacts with CTRP9B. Forms heterotrimers and heterooligomeric complexes with CTRP9B. As to expression, expressed predominantly in adipose tissue.

It localises to the secreted. Probable adipokine. Activates AMPK, AKT, and p44/42 MAPK signaling pathways. The protein is Complement C1q and tumor necrosis factor-related protein 9A (C1QTNF9) of Homo sapiens (Human).